Consider the following 75-residue polypeptide: Large ribosomal subunit protein uL30 (75 aa).

This sequence belongs to the universal ribosomal protein uL30 family. As to quaternary structure, part of the 50S ribosomal subunit.

In Roseiflexus castenholzii (strain DSM 13941 / HLO8), this protein is Large ribosomal subunit protein uL30.